The chain runs to 525 residues: MNDFWQHCSALLERELTPQQYVTWIKPLAPVAFDASANTLSIAAPNRFKLDWVKSQFSGRISDLAREFWNTPIEVQFVLDPKAGMRSAAASAAPAAPRAPLTPGGPAATVAAIAANLTANAAAAPSAPADVPMTPSAAAAHHLNADDADIDLPSLPAHEAAAGRRTWRPGPGAAPANGGEADSMYERSKLNPVLTFDNFVTGKANQLARAAAIQVADNPGISYNPLFLYGGVGLGKTHLIHAIGNQLLLDKAGARIRYIHAEQYVSDVVKAYQRKAFDDFKRYYHSLDLLLIDDIQFFSGKSRTQEEFFYAFEALVANKAQVIITSDTYPKEISGIDDRLISRFDSGLTVAIEPPELEMRVAILMRKAQSEGVNLSEDVAFFVAKHLRSNVRELEGALRKILAYSKFHGREISIELTKEALKDLLTVQNRQISVENIQKTVADFYNIKVADMYSKKRPANIARPRQIAMYLAKELTQKSLPEIGELFGGRDHTTVLHAVRKIADERSKDAQLNHELHVLEQTLKG.

The segment at 1–71 is domain I, interacts with DnaA modulators; it reads MNDFWQHCSA…SDLAREFWNT (71 aa). The interval 71-188 is domain II; that stretch reads TPIEVQFVLD…GEADSMYERS (118 aa). The segment at 162–182 is disordered; sequence AGRRTWRPGPGAAPANGGEAD. The segment covering 169 to 181 has biased composition (low complexity); sequence PGPGAAPANGGEA. Residues 189-405 form a domain III, AAA+ region region; the sequence is KLNPVLTFDN…GALRKILAYS (217 aa). ATP-binding residues include Gly233, Gly235, Lys236, and Thr237. The segment at 406-525 is domain IV, binds dsDNA; that stretch reads KFHGREISIE…LHVLEQTLKG (120 aa).

It belongs to the DnaA family. In terms of assembly, oligomerizes as a right-handed, spiral filament on DNA at oriC.

The protein resides in the cytoplasm. Plays an essential role in the initiation and regulation of chromosomal replication. ATP-DnaA binds to the origin of replication (oriC) to initiate formation of the DNA replication initiation complex once per cell cycle. Binds the DnaA box (a 9 base pair repeat at the origin) and separates the double-stranded (ds)DNA. Forms a right-handed helical filament on oriC DNA; dsDNA binds to the exterior of the filament while single-stranded (ss)DNA is stabiized in the filament's interior. The ATP-DnaA-oriC complex binds and stabilizes one strand of the AT-rich DNA unwinding element (DUE), permitting loading of DNA polymerase. After initiation quickly degrades to an ADP-DnaA complex that is not apt for DNA replication. Binds acidic phospholipids. This is Chromosomal replication initiator protein DnaA from Burkholderia cenocepacia (strain HI2424).